The following is an 891-amino-acid chain: DNA mismatch repair protein MutS (891 aa).

617–624 (GPNMSGKS) contributes to the ATP binding site. Residues 805 to 827 (REKIEEEEPKTKDTKRGPSEKVK) are compositionally biased toward basic and acidic residues. The interval 805–840 (REKIEEEEPKTKDTKRGPSEKVKNASPTLPRDEKGR) is disordered.

Belongs to the DNA mismatch repair MutS family.

Its function is as follows. This protein is involved in the repair of mismatches in DNA. It is possible that it carries out the mismatch recognition step. This protein has a weak ATPase activity. This is DNA mismatch repair protein MutS from Porphyromonas gingivalis (strain ATCC BAA-308 / W83).